The chain runs to 275 residues: Fructose-2,6-bisphosphatase TIGAR (275 aa).

His-11 (tele-phosphohistidine intermediate) is an active-site residue. Residue Glu-89 is the Proton donor/acceptor of the active site.

It belongs to the phosphoglycerate mutase family.

It is found in the cytoplasm. The protein resides in the nucleus. Its subcellular location is the mitochondrion. It carries out the reaction beta-D-fructose 2,6-bisphosphate + H2O = beta-D-fructose 6-phosphate + phosphate. Fructose-bisphosphatase hydrolyzing fructose-2,6-bisphosphate as well as fructose-1,6-bisphosphate. Acts as a negative regulator of glycolysis by lowering intracellular levels of fructose-2,6-bisphosphate in a p53/TP53-dependent manner, resulting in the pentose phosphate pathway (PPP) activation and NADPH production. Contributes to the generation of reduced glutathione to cause a decrease in intracellular reactive oxygen species (ROS) content, correlating with its ability to protect cells from oxidative or metabolic stress-induced cell death. May play a role in mitophagy inhibition. The protein is Fructose-2,6-bisphosphatase TIGAR of Xenopus tropicalis (Western clawed frog).